An 87-amino-acid chain; its full sequence is Small ribosomal subunit protein bS20 (87 aa).

A disordered region spans residues 1–22 (MANIKSQIKRIGTNKKAQERNK).

The protein belongs to the bacterial ribosomal protein bS20 family.

Functionally, binds directly to 16S ribosomal RNA. The polypeptide is Small ribosomal subunit protein bS20 (Clavibacter sepedonicus (Clavibacter michiganensis subsp. sepedonicus)).